A 1661-amino-acid chain; its full sequence is Microtubule cross-linking factor 2 (1661 aa).

Residues 1-187 are disordered; sequence MEAPAAEPPV…EPSVAASSVG (187 aa). Composition is skewed to low complexity over residues 76–94 and 133–149; these read AVAP…VRTG and LLGL…SAAG. Residues 167–176 show a composition bias toward pro residues; the sequence is QQPPRPPASP. A required for association with Golgi apparatus membrane region spans residues 211-240; the sequence is PSGLVRELEELRSENDYLKDEIEELRAEML. Coiled-coil stretches lie at residues 218–281 and 310–351; these read LEEL…AERR and SMRL…LQTE. A disordered region spans residues 353–373; it reads ERPREHSLKKRGTRSLGKADK. Coiled coils occupy residues 450 to 484, 820 to 865, and 1083 to 1117; these read LKLV…MKDH, IKEL…LKED, and SQEK…LQKA. Serine 1169 is modified (phosphoserine). The disordered stretch occupies residues 1196-1221; it reads AFGFVSSEPGDPEKDTKEKPGLSSRD. The span at 1206–1215 shows a compositional bias: basic and acidic residues; the sequence is DPEKDTKEKP. The residue at position 1255 (serine 1255) is a Phosphoserine. 3 disordered regions span residues 1432–1456, 1538–1563, and 1636–1661; these read RPCC…DSSK, RAPS…ASYH, and HSPS…PPSE. Over residues 1652–1661 the composition is skewed to basic and acidic residues; the sequence is GEERALPPSE.

Belongs to the MTCL family. As to quaternary structure, interacts with CLASP1 and CLASP2. The C-terminal 25 kDa form occurs as a monomer. In terms of processing, proteolytically cleaved in primary hepatocytes into a C-terminal 80 kDa form. Proteolytically cleaved into a C-terminal SOGA 25 kDa form that is detected in plasma. Phosphorylated during mitosis in a CDK1-dependent manner.

The protein localises to the cytoplasm. The protein resides in the cytoskeleton. It is found in the golgi apparatus membrane. Its subcellular location is the midbody. It localises to the secreted. Microtubule-associated factor that enables integration of the centrosomal and Golgi-associated microtubules on the Golgi membrane, supporting directional migration. Preferentially acts on the perinuclear microtubules accumulated around the Golgi. Associates with the Golgi membrane through the N-terminal coiled-coil region and directly binds microtubules through the C-terminal domain. Required for faithful chromosome segregation during mitosis. Regulates autophagy by playing a role in the reduction of glucose production in an adiponectin- and insulin-dependent manner. This chain is Microtubule cross-linking factor 2, found in Homo sapiens (Human).